We begin with the raw amino-acid sequence, 848 residues long: Leucine--tRNA ligase (848 aa).

Residues Met1–Met16 are compositionally biased toward basic and acidic residues. The segment at Met1 to Ala30 is disordered. Over residues Glu18 to Ala30 the composition is skewed to low complexity. Residues Pro69–His79 carry the 'HIGH' region motif. The 'KMSKS' region motif lies at Lys614–Ser618. Lys617 provides a ligand contact to ATP.

This sequence belongs to the class-I aminoacyl-tRNA synthetase family.

It localises to the cytoplasm. It catalyses the reaction tRNA(Leu) + L-leucine + ATP = L-leucyl-tRNA(Leu) + AMP + diphosphate. This chain is Leucine--tRNA ligase, found in Nocardioides sp. (strain ATCC BAA-499 / JS614).